Reading from the N-terminus, the 264-residue chain is Pyridoxine 5'-phosphate synthase (264 aa).

Residue Asn28 coordinates 3-amino-2-oxopropyl phosphate. Position 30–31 (30–31 (DH)) interacts with 1-deoxy-D-xylulose 5-phosphate. Arg39 contacts 3-amino-2-oxopropyl phosphate. His64 functions as the Proton acceptor in the catalytic mechanism. The 1-deoxy-D-xylulose 5-phosphate site is built by Arg66 and His71. The Proton acceptor role is filled by Glu91. Residue Thr121 coordinates 1-deoxy-D-xylulose 5-phosphate. Residue His217 is the Proton donor of the active site. 3-amino-2-oxopropyl phosphate is bound by residues Gly218 and 239-240 (GH).

The protein belongs to the PNP synthase family. In terms of assembly, homooctamer; tetramer of dimers.

The protein localises to the cytoplasm. The enzyme catalyses 3-amino-2-oxopropyl phosphate + 1-deoxy-D-xylulose 5-phosphate = pyridoxine 5'-phosphate + phosphate + 2 H2O + H(+). It participates in cofactor biosynthesis; pyridoxine 5'-phosphate biosynthesis; pyridoxine 5'-phosphate from D-erythrose 4-phosphate: step 5/5. In terms of biological role, catalyzes the complicated ring closure reaction between the two acyclic compounds 1-deoxy-D-xylulose-5-phosphate (DXP) and 3-amino-2-oxopropyl phosphate (1-amino-acetone-3-phosphate or AAP) to form pyridoxine 5'-phosphate (PNP) and inorganic phosphate. This chain is Pyridoxine 5'-phosphate synthase, found in Psychrobacter arcticus (strain DSM 17307 / VKM B-2377 / 273-4).